The primary structure comprises 335 residues: Pro-cathepsin H (335 aa).

Positions 1–22 (MWATLPLLCAGAWLLGVPVCGA) are cleaved as a signal peptide. Residues 23 to 97 (AELCVNSLEK…AEIKHKYLWS (75 aa)) constitute a propeptide, activation peptide. Residue Asn101 is glycosylated (N-linked (GlcNAc...) asparagine). Cystine bridges form between Cys102-Cys327, Cys138-Cys181, Cys172-Cys214, and Cys272-Cys322. A propeptide spanning residues 106–115 (KSNYLRGTGP) is cleaved from the precursor. Residue Cys141 is part of the active site. N-linked (GlcNAc...) asparagine glycosylation occurs at Asn230. Active-site residues include His281 and Asn301.

Belongs to the peptidase C1 family. In terms of assembly, composed of a mini chain and a large chain. The large chain may be split into heavy and light chain. All chains are held together by disulfide bonds.

It localises to the lysosome. It carries out the reaction Hydrolysis of proteins, acting as an aminopeptidase (notably, cleaving Arg-|-Xaa bonds) as well as an endopeptidase.. Its function is as follows. Important for the overall degradation of proteins in lysosomes. The polypeptide is Pro-cathepsin H (CTSH) (Homo sapiens (Human)).